Here is a 231-residue protein sequence, read N- to C-terminus: Ribosyldihydronicotinamide dehydrogenase [quinone] (231 aa).

Residues histidine 12, phenylalanine 18 to serine 21, and leucine 104 to phenylalanine 107 each bind FAD. Phenylalanine 127 to isoleucine 129 serves as a coordination point for substrate. FAD-binding positions include threonine 148–glycine 151 and tyrosine 156. Positions 174 and 178 each coordinate Zn(2+). Aspartate 194 is a binding site for FAD. Serine 197 is subject to Phosphoserine. FAD is bound at residue arginine 201. Cysteine 223 contacts Zn(2+).

This sequence belongs to the NAD(P)H dehydrogenase (quinone) family. Homodimer. It depends on Zn(2+) as a cofactor. FAD serves as cofactor.

The protein resides in the cytoplasm. The catalysed reaction is 1-(beta-D-ribofuranosyl)-1,4-dihydronicotinamide + a quinone + H(+) = beta-nicotinamide D-riboside + a quinol. Functionally, the enzyme apparently serves as a quinone reductase in connection with conjugation reactions of hydroquinones involved in detoxification pathways as well as in biosynthetic processes such as the vitamin K-dependent gamma-carboxylation of glutamate residues in prothrombin synthesis. The protein is Ribosyldihydronicotinamide dehydrogenase [quinone] (Nqo2) of Mus musculus (Mouse).